The following is a 418-amino-acid chain: Calreticulin (418 aa).

An N-terminal signal peptide occupies residues 1 to 17; the sequence is MLLPVPLLLGLLGLAAA. Residues 18–197 are N-domain; it reads EPVVYFKEQF…NSQVESGSLE (180 aa). Gln26 is a binding site for Ca(2+). Lys48 is subject to N6-acetyllysine. Ca(2+) contacts are provided by Lys62 and Lys64. Lys64 carries the N6-(2-hydroxyisobutyryl)lysine modification. An intrachain disulfide couples Cys105 to Cys137. An alpha-D-glucoside is bound by residues Tyr109, Lys111, Tyr128, and Asp135. Residue Lys159 is modified to N6-acetyllysine. The 1-1 repeat unit spans residues 191–202; it reads VESGSLEDDWDF. Positions 191–255 are 4 X approximate repeats; that stretch reads VESGSLEDDW…DAKKPEDWDE (65 aa). The tract at residues 193-277 is disordered; sequence SGSLEDDWDF…NPEYKGEWKP (85 aa). Positions 198 to 308 are P-domain; that stretch reads DDWDFLPPKK…YSPDANIYAY (111 aa). The span at 207 to 251 shows a compositional bias: basic and acidic residues; that stretch reads KIKDPDASKPEDWDERAKIDDPTDSKPEDWDKPEHIPDPDAKKPE. At Lys209 the chain carries N6-acetyllysine. 6 repeat units span residues 210 to 221, 227 to 238, 244 to 255, 259 to 269, 273 to 283, and 287 to 297. Positions 237–270 are interaction with PPIB; the sequence is DKPEHIPDPDAKKPEDWDEEMDGEWEPPVIQNPE. The span at 252–261 shows a compositional bias: acidic residues; sequence DWDEEMDGEW. The segment at 259–297 is 3 X approximate repeats; sequence GEWEPPVIQNPEYKGEWKPRQIDNPDYKGTWIHPEIDNP. Residues 309-418 form a C-domain region; that stretch reads DSFAVLGLDL…AAAGQAKDEL (110 aa). Asp317 serves as a coordination point for an alpha-D-glucoside. Ca(2+) is bound at residue Asp328. Positions 349–418 are disordered; sequence VTKTAEKQMK…AAAGQAKDEL (70 aa). Over residues 352–379 the composition is skewed to basic and acidic residues; the sequence is TAEKQMKDKQDEEQRLKEEEEEKKRKEE. The span at 380–409 shows a compositional bias: acidic residues; that stretch reads EEAEEDEEDKDDKEDEDEDEEDKDEEEEEA. A Prevents secretion from ER motif is present at residues 415–418; sequence KDEL.

This sequence belongs to the calreticulin family. As to quaternary structure, monomer. Component of an EIF2 complex at least composed of CELF1/CUGBP1, CALR, CALR3, EIF2S1, EIF2S2, HSP90B1 and HSPA5. Interacts with PDIA3/ERp57 and SPACA9. Interacts with TRIM21. Interacts with NR3C1. Interacts with PPIB. Interacts (via P-domain) with PDIA5. Interacts with CLCC1.

Its subcellular location is the endoplasmic reticulum lumen. It is found in the cytoplasm. It localises to the cytosol. The protein localises to the secreted. The protein resides in the extracellular space. Its subcellular location is the extracellular matrix. It is found in the cell surface. It localises to the sarcoplasmic reticulum lumen. The protein localises to the cytoplasmic vesicle. The protein resides in the secretory vesicle. Its subcellular location is the cortical granule. It is found in the cytolytic granule. Calcium-binding chaperone that promotes folding, oligomeric assembly and quality control in the endoplasmic reticulum (ER) via the calreticulin/calnexin cycle. This lectin interacts transiently with almost all of the monoglucosylated glycoproteins that are synthesized in the ER. Interacts with the DNA-binding domain of NR3C1 and mediates its nuclear export. Involved in maternal gene expression regulation. May participate in oocyte maturation via the regulation of calcium homeostasis. Present in the cortical granules of non-activated oocytes, is exocytosed during the cortical reaction in response to oocyte activation and might participate in the block to polyspermy. In Oryctolagus cuniculus (Rabbit), this protein is Calreticulin (CALR).